The following is a 352-amino-acid chain: Mas-related G-protein coupled receptor member X2 (352 aa).

Residues 1 to 45 (MEERNISGRDLRVDSNITYWGTNITAVNESNHTGMSFCEVVSCTM) lie on the Extracellular side of the membrane. Residues Asn-5, Asn-16, Asn-23, Asn-28, and Asn-31 are each glycosylated (N-linked (GlcNAc...) asparagine). Residues 46–66 (VFLSLIVALVGLVGNATVLWF) traverse the membrane as a helical segment. Residues 67–75 (LGFQMRRNA) lie on the Cytoplasmic side of the membrane. Residues 76–96 (FSVYILNLAGADFLFICFQIG) form a helical membrane-spanning segment. Residues 97–107 (YCFHMILDIDS) lie on the Extracellular side of the membrane. Residues 108 to 128 (IPIEIDLFYLVVLNFPYFCGL) traverse the membrane as a helical segment. Topologically, residues 129–155 (SILSAISIERCLSVMWPIWYHCQRPRH) are cytoplasmic. Residues 156-176 (TSAVICTLLWVLSLVCSLLEG) form a helical membrane-spanning segment. Over 177 to 195 (KECGFLYYTSDPGWCKTFD) the chain is Extracellular. Residues 196-216 (LITATWLIVLFVALLGSSLAL) form a helical membrane-spanning segment. The Cytoplasmic segment spans residues 217–239 (VITIFWGLHKIPVTRLYVAIVFT). The helical transmembrane segment at 240-260 (VLVFLLFGLPYGIYWFLLVWI) threads the bilayer. The Extracellular segment spans residues 261-275 (EKFYYVLPCSIYPVT). Residues 276–296 (VFLSCVNSSAKPIIYCLVGSI) form a helical membrane-spanning segment. Residues 297 to 347 (RHHRFQRKTLKLFLQRAMQDTPEEEECGEMGSSGRSREIKTIWKGLRAALI) lie on the Cytoplasmic side of the membrane.

Belongs to the G-protein coupled receptor 1 family. Mas subfamily.

It localises to the cell membrane. Functionally, orphan receptor. Probably involved in the function of nociceptive neurons. May regulate nociceptor function and/or development, including the sensation or modulation of pain. The protein is Mas-related G-protein coupled receptor member X2 (Mrgprx2) of Mus musculus (Mouse).